A 507-amino-acid chain; its full sequence is E3 SUMO-protein ligase PIAS4 (507 aa).

Ala2 carries the post-translational modification N-acetylalanine. Lys9 participates in a covalent cross-link: Glycyl lysine isopeptide (Lys-Gly) (interchain with G-Cter in SUMO2). The SAP domain maps to 12-46 (VMSFRVSDLQMLLGFVGRSKSGLKHELVTRALQLV). The LXXLL motif motif lies at 20–24 (LQMLL). Lys35 is covalently cross-linked (Glycyl lysine isopeptide (Lys-Gly) (interchain with G-Cter in SUMO); alternate). Lys35 participates in a covalent cross-link: Glycyl lysine isopeptide (Lys-Gly) (interchain with G-Cter in SUMO2); alternate. Glycyl lysine isopeptide (Lys-Gly) (interchain with G-Cter in SUMO2) cross-links involve residues Lys56, Lys59, Lys68, and Lys69. Residue Lys107 is modified to N6-acetyllysine. One can recognise a PINIT domain in the interval 112–272 (LGRLPTKTLK…SVALYLVRQL (161 aa)). Residue Lys118 forms a Glycyl lysine isopeptide (Lys-Gly) (interchain with G-Cter in SUMO2) linkage. Lys128 participates in a covalent cross-link: Glycyl lysine isopeptide (Lys-Gly) (interchain with G-Cter in SUMO). The SP-RING-type zinc finger occupies 304–385 (PDSEIATTGV…LSKILSECEG (82 aa)). Zn(2+) is bound by residues Cys335, His337, Cys358, and Cys361. The segment at 426–507 (APASSTPGIG…PFQKGLVPAC (82 aa)) is disordered. Residues 434–450 (IGSGLSGPGSAGSGAGA) are compositionally biased toward gly residues. The segment covering 474 to 489 (SEDEDEDEDDDEDEDE) has biased composition (acidic residues).

Belongs to the PIAS family. Interacts with AR, GATA2, LEF1, TP53 and STAT1 (IFNG-induced). Interacts with TICAM1. Interacts with MTA1. Interacts with PRDM1/Blimp-1. Interacts with TRIM32 upon treatment with UVB and TNF-alpha. In terms of assembly, (Microbial infection) Interacts ewith Moloney murine leukemia virus Capsid protein p30. In terms of processing, sumoylated. Lys-35 is the main site of sumoylation. Sumoylation is required for TCF4 sumoylation and transcriptional activation. Represses LEF1 transcriptional activity. SUMO1 is the preferred conjugate. Ubiquitinated by TRIM32 upon treatment with UVB and TNF-alpha. In terms of tissue distribution, widely expressed, with highest levels in testis. Also expressed in vascular endothelial cells, in primary keratinocytes and in the CNS, including cortex, olfactory bulb, spinal cord, thalamus and trigeminal ganglion. Low expression, if any, in liver and lung.

It is found in the nucleus. The protein localises to the PML body. It carries out the reaction S-ubiquitinyl-[E2 ubiquitin-conjugating enzyme]-L-cysteine + [acceptor protein]-L-lysine = [E2 ubiquitin-conjugating enzyme]-L-cysteine + N(6)-ubiquitinyl-[acceptor protein]-L-lysine.. The protein operates within protein modification; protein sumoylation. Functionally, functions as an E3-type small ubiquitin-like modifier (SUMO) ligase, stabilizing the interaction between UBE2I and the substrate, and as a SUMO-tethering factor. Mediates sumoylation of ALKBH5, AXIN1, CEBPA, KLF8, GATA2, PARK7, HERC2, MYB, TCF4 and RNF168. Plays a crucial role as a transcriptional coregulation in various cellular pathways, including the STAT pathway, the p53/TP53 pathway, the Wnt pathway and the steroid hormone signaling pathway. Involved in gene silencing. In Wnt signaling, represses LEF1 and enhances TCF4 transcriptional activities through promoting their sumoylations. Enhances the sumoylation of MTA1 and may participate in its paralog-selective sumoylation. Binds to AT-rich DNA sequences, known as matrix or scaffold attachment regions (MARs/SARs). Catalyzes conjugation of SUMO2 to KAT5 in response to DNA damage, facilitating repair of DNA double-strand breaks (DSBs) via homologous recombination (HR). Mediates sumoylation of PARP1 in response to PARP1 trapping to chromatin. Mediates sumoylation of KLF8, repressiing KLF8 transcriptional activity and cell cycle progression into G(1) phase. Sumoylates ALKBH5 downstream of MAPK8/JNK1 and MAPK9/JNK2 in response to reactive oxygen species (ROS), inhibiting ALKBH5 RNA demethylase activity. This chain is E3 SUMO-protein ligase PIAS4 (Pias4), found in Mus musculus (Mouse).